Reading from the N-terminus, the 211-residue chain is MRIGILGGTFDPIHFGHIRPALEVRDKLNLDRVWLMPNHIPPHKASTCVSTEQRLEMVQLVCDQYDEFDLCDIEAKRDTPSYLVTTLKQLRDEHPNDEFYFIMGMDSLVSLPTWYEWRSIFTLCHIVVSERHGWCLNPDSAIYEEYEHRLTSTNQIPSQSTGLIIPIEIAPQPYSSTEIRHQLFNGIIPENALPSKIIKFIQHNSLYQAPA.

The protein belongs to the NadD family.

The catalysed reaction is nicotinate beta-D-ribonucleotide + ATP + H(+) = deamido-NAD(+) + diphosphate. It participates in cofactor biosynthesis; NAD(+) biosynthesis; deamido-NAD(+) from nicotinate D-ribonucleotide: step 1/1. In terms of biological role, catalyzes the reversible adenylation of nicotinate mononucleotide (NaMN) to nicotinic acid adenine dinucleotide (NaAD). This is Probable nicotinate-nucleotide adenylyltransferase from Shewanella sediminis (strain HAW-EB3).